The following is a 315-amino-acid chain: Ribosomal RNA small subunit methyltransferase H (315 aa).

S-adenosyl-L-methionine-binding positions include 35–37 (GGH), Asp-55, Phe-80, Asp-102, and Gln-109.

The protein belongs to the methyltransferase superfamily. RsmH family.

The protein localises to the cytoplasm. The enzyme catalyses cytidine(1402) in 16S rRNA + S-adenosyl-L-methionine = N(4)-methylcytidine(1402) in 16S rRNA + S-adenosyl-L-homocysteine + H(+). Its function is as follows. Specifically methylates the N4 position of cytidine in position 1402 (C1402) of 16S rRNA. The protein is Ribosomal RNA small subunit methyltransferase H of Shewanella halifaxensis (strain HAW-EB4).